The chain runs to 160 residues: Cytochrome b6-f complex subunit 4 (160 aa).

Transmembrane regions (helical) follow at residues 36–56, 95–115, and 128–148; these read LLYI…GLAV, LLGI…PFIE, and IAMS…IGAC.

It belongs to the cytochrome b family. PetD subfamily. In terms of assembly, the 4 large subunits of the cytochrome b6-f complex are cytochrome b6, subunit IV (17 kDa polypeptide, PetD), cytochrome f and the Rieske protein, while the 4 small subunits are PetG, PetL, PetM and PetN. The complex functions as a dimer.

It is found in the cellular thylakoid membrane. Its function is as follows. Component of the cytochrome b6-f complex, which mediates electron transfer between photosystem II (PSII) and photosystem I (PSI), cyclic electron flow around PSI, and state transitions. The chain is Cytochrome b6-f complex subunit 4 from Prochlorococcus marinus (strain MIT 9301).